The following is a 299-amino-acid chain: Diaminopimelate epimerase (299 aa).

Residues asparagine 11 and asparagine 63 each contribute to the substrate site. The active-site Proton donor is the cysteine 72. Substrate-binding positions include 73–74 (GN), asparagine 211, and 229–230 (ER). Cysteine 238 serves as the catalytic Proton acceptor. 239–240 (GT) serves as a coordination point for substrate.

Belongs to the diaminopimelate epimerase family. As to quaternary structure, homodimer.

It localises to the cytoplasm. The catalysed reaction is (2S,6S)-2,6-diaminopimelate = meso-2,6-diaminopimelate. The protein operates within amino-acid biosynthesis; L-lysine biosynthesis via DAP pathway; DL-2,6-diaminopimelate from LL-2,6-diaminopimelate: step 1/1. Catalyzes the stereoinversion of LL-2,6-diaminopimelate (L,L-DAP) to meso-diaminopimelate (meso-DAP), a precursor of L-lysine and an essential component of the bacterial peptidoglycan. In Natranaerobius thermophilus (strain ATCC BAA-1301 / DSM 18059 / JW/NM-WN-LF), this protein is Diaminopimelate epimerase.